The sequence spans 579 residues: Probable cytochrome c biosynthesis protein (579 aa).

Belongs to the CcmF/CycK/Ccl1/NrfE/CcsA family.

The protein localises to the mitochondrion. Functionally, could be involved in assembly and maturation of cytochromes c. May play a role in guidance of apocytochromes and heme groups for the covalent linkage introduced by the cytochrome-c-heme lyase. The polypeptide is Probable cytochrome c biosynthesis protein (Daucus carota (Wild carrot)).